Reading from the N-terminus, the 513-residue chain is V-type proton ATPase subunit B, kidney isoform (513 aa).

Residue Arg394 coordinates ATP. A PDZ-binding motif is present at residues 510–513; the sequence is DTAL.

This sequence belongs to the ATPase alpha/beta chains family. V-ATPase is a heteromultimeric enzyme made up of two complexes: the ATP-hydrolytic V1 complex and the proton translocation V0 complex. The V1 complex consists of three catalytic AB heterodimers that form a heterohexamer, three peripheral stalks each consisting of EG heterodimers, one central rotor including subunits D and F, and the regulatory subunits C and H. The proton translocation complex V0 consists of the proton transport subunit a, a ring of proteolipid subunits c9c'', rotary subunit d, subunits e and f, and the accessory subunits ATP6AP1/Ac45 and ATP6AP2/PRR. Forms a complex with NHERF1 and SCL4A7. As to expression, kidney; localizes to early distal nephron, encompassing thick ascending limbs and distal convoluted tubules (at protein level). Expressed in the cochlea and endolymphatic sac.

It is found in the apical cell membrane. The protein resides in the basolateral cell membrane. Functionally, non-catalytic subunit of the V1 complex of vacuolar(H+)-ATPase (V-ATPase), a multisubunit enzyme composed of a peripheral complex (V1) that hydrolyzes ATP and a membrane integral complex (V0) that translocates protons. V-ATPase is responsible for acidifying and maintaining the pH of intracellular compartments and in some cell types, is targeted to the plasma membrane, where it is responsible for acidifying the extracellular environment. Essential for the proper assembly and activity of V-ATPase. In renal intercalated cells, mediates secretion of protons (H+) into the urine thereby ensuring correct urinary acidification. Required for optimal olfactory function by mediating the acidification of the nasal olfactory epithelium. The chain is V-type proton ATPase subunit B, kidney isoform (ATP6V1B1) from Homo sapiens (Human).